We begin with the raw amino-acid sequence, 386 residues long: Chorismate synthase (386 aa).

NADP(+) contacts are provided by R45 and R51. FMN contacts are provided by residues 131 to 133 (RTS), 251 to 252 (QG), S294, 309 to 313 (KPIPS), and R335.

Belongs to the chorismate synthase family. In terms of assembly, homotetramer. It depends on FMNH2 as a cofactor.

The enzyme catalyses 5-O-(1-carboxyvinyl)-3-phosphoshikimate = chorismate + phosphate. It functions in the pathway metabolic intermediate biosynthesis; chorismate biosynthesis; chorismate from D-erythrose 4-phosphate and phosphoenolpyruvate: step 7/7. In terms of biological role, catalyzes the anti-1,4-elimination of the C-3 phosphate and the C-6 proR hydrogen from 5-enolpyruvylshikimate-3-phosphate (EPSP) to yield chorismate, which is the branch point compound that serves as the starting substrate for the three terminal pathways of aromatic amino acid biosynthesis. This reaction introduces a second double bond into the aromatic ring system. The polypeptide is Chorismate synthase (Clostridium tetani (strain Massachusetts / E88)).